Consider the following 239-residue polypeptide: Purine nucleoside phosphorylase DeoD-type (239 aa).

Position 5 (His-5) interacts with a purine D-ribonucleoside. Residues Gly-21, Arg-25, Arg-44, and 88 to 91 (RVGS) each bind phosphate. Residues 180–182 (EME) and 204–205 (SD) contribute to the a purine D-ribonucleoside site. Asp-205 serves as the catalytic Proton donor.

Belongs to the PNP/UDP phosphorylase family. In terms of assembly, homohexamer; trimer of homodimers.

The catalysed reaction is a purine D-ribonucleoside + phosphate = a purine nucleobase + alpha-D-ribose 1-phosphate. It catalyses the reaction a purine 2'-deoxy-D-ribonucleoside + phosphate = a purine nucleobase + 2-deoxy-alpha-D-ribose 1-phosphate. Its function is as follows. Catalyzes the reversible phosphorolytic breakdown of the N-glycosidic bond in the beta-(deoxy)ribonucleoside molecules, with the formation of the corresponding free purine bases and pentose-1-phosphate. This Salmonella choleraesuis (strain SC-B67) protein is Purine nucleoside phosphorylase DeoD-type.